Here is a 413-residue protein sequence, read N- to C-terminus: ORC1-type DNA replication protein 10 (413 aa).

Residues 63 to 67 (VGKTA), Tyr-211, and Arg-223 contribute to the ATP site.

The protein belongs to the CDC6/cdc18 family.

In terms of biological role, involved in regulation of DNA replication. This Halobacterium salinarum (strain ATCC 700922 / JCM 11081 / NRC-1) (Halobacterium halobium) protein is ORC1-type DNA replication protein 10 (orc10).